A 374-amino-acid polypeptide reads, in one-letter code: S-adenosylmethionine:tRNA ribosyltransferase-isomerase (374 aa).

The protein belongs to the QueA family. As to quaternary structure, monomer.

The protein resides in the cytoplasm. The enzyme catalyses 7-aminomethyl-7-carbaguanosine(34) in tRNA + S-adenosyl-L-methionine = epoxyqueuosine(34) in tRNA + adenine + L-methionine + 2 H(+). It functions in the pathway tRNA modification; tRNA-queuosine biosynthesis. Functionally, transfers and isomerizes the ribose moiety from AdoMet to the 7-aminomethyl group of 7-deazaguanine (preQ1-tRNA) to give epoxyqueuosine (oQ-tRNA). This chain is S-adenosylmethionine:tRNA ribosyltransferase-isomerase, found in Sorangium cellulosum (strain So ce56) (Polyangium cellulosum (strain So ce56)).